Here is a 69-residue protein sequence, read N- to C-terminus: uncharacterized protein (69 aa).

Positions 1 to 21 (MELLIPLSLLGLYLFSGTRDS) are cleaved as a signal peptide. Asn-41 carries an N-linked (GlcNAc...) asparagine glycan.

It is found in the secreted. This is an uncharacterized protein from Dictyostelium discoideum (Social amoeba).